Reading from the N-terminus, the 490-residue chain is NAD/NADP-dependent betaine aldehyde dehydrogenase (490 aa).

K(+) is bound by residues Thr26, Ile27, and Asp93. An NADPH-binding site is contributed by 150–153 (GAWN). The active-site Charge relay system is the Lys162. 176-179 (KPSE) is a binding site for NADPH. Residue Val180 coordinates K(+). NADPH contacts are provided by residues Gly209 and 230-233 (GTST). Leu246 is a binding site for K(+). Glu252 (proton acceptor) is an active-site residue. Cys286 and Glu387 together coordinate NADPH. Cys286 (nucleophile) is an active-site residue. Cys286 carries the cysteine sulfenic acid (-SOH) modification. Residues Lys457 and Gly460 each contribute to the K(+) site. Glu464 functions as the Charge relay system in the catalytic mechanism.

The protein belongs to the aldehyde dehydrogenase family. Dimer of dimers. K(+) serves as cofactor.

The catalysed reaction is betaine aldehyde + NAD(+) + H2O = glycine betaine + NADH + 2 H(+). The enzyme catalyses betaine aldehyde + NADP(+) + H2O = glycine betaine + NADPH + 2 H(+). Its pathway is amine and polyamine biosynthesis; betaine biosynthesis via choline pathway; betaine from betaine aldehyde: step 1/1. In terms of biological role, involved in the biosynthesis of the osmoprotectant glycine betaine. Catalyzes the irreversible oxidation of betaine aldehyde to the corresponding acid. In P.aeruginosa this reaction is a compulsory step in the assimilation of carbon and nitrogen when bacteria are growing in choline or choline precursors. Can use NADP(+) with similar efficiency to NAD(+), a property that can be used by the bacterium to produce the NADPH needed to combat the oxidative stress imposed by the host defenses. This Pseudomonas aeruginosa (strain ATCC 15692 / DSM 22644 / CIP 104116 / JCM 14847 / LMG 12228 / 1C / PRS 101 / PAO1) protein is NAD/NADP-dependent betaine aldehyde dehydrogenase.